A 119-amino-acid chain; its full sequence is Large ribosomal subunit protein bL20 (119 aa).

The protein belongs to the bacterial ribosomal protein bL20 family.

Functionally, binds directly to 23S ribosomal RNA and is necessary for the in vitro assembly process of the 50S ribosomal subunit. It is not involved in the protein synthesizing functions of that subunit. This chain is Large ribosomal subunit protein bL20, found in Rhodospirillum centenum (strain ATCC 51521 / SW).